Consider the following 419-residue polypeptide: Squalene synthase R6 (419 aa).

The helical transmembrane segment at 397-417 (TMYLVVLLLGILGVAAAVLMA) threads the bilayer.

Belongs to the phytoene/squalene synthase family. Mg(2+) serves as cofactor.

The protein localises to the membrane. It carries out the reaction 2 (2E,6E)-farnesyl diphosphate + NADPH + H(+) = squalene + 2 diphosphate + NADP(+). It catalyses the reaction 2 (2E,6E)-farnesyl diphosphate + NADH + H(+) = squalene + 2 diphosphate + NAD(+). The protein operates within terpene metabolism; lanosterol biosynthesis; lanosterol from farnesyl diphosphate: step 1/3. Functionally, squalene synthase; part of the gene cluster that mediates the biosynthesis of squalestatin S1 (SQS1, also known as zaragozic acid A), a heavily oxidized fungal polyketide that offers potent cholesterol lowering activity by targeting squalene synthase (SS). Catalyzes the condensation of 2 two farnesyl pyrophosphate moieties to form squalene. The presence of a gene encoding a squalene synthase supports the identification of the cluster as being responsible for SQS1 production and suggests a likely mechanism for self-resistance. This chain is Squalene synthase R6, found in Phoma sp. (strain ATCC 20986 / MF5453).